Reading from the N-terminus, the 200-residue chain is Dephospho-CoA kinase (200 aa).

In terms of domain architecture, DPCK spans 3–200; sequence VLGLTGSIGM…LSGKPAAATR (198 aa). An ATP-binding site is contributed by 11-16; sequence GMGKTT.

This sequence belongs to the CoaE family.

The protein localises to the cytoplasm. The enzyme catalyses 3'-dephospho-CoA + ATP = ADP + CoA + H(+). The protein operates within cofactor biosynthesis; coenzyme A biosynthesis; CoA from (R)-pantothenate: step 5/5. Its function is as follows. Catalyzes the phosphorylation of the 3'-hydroxyl group of dephosphocoenzyme A to form coenzyme A. This is Dephospho-CoA kinase from Brucella melitensis biotype 1 (strain ATCC 23456 / CCUG 17765 / NCTC 10094 / 16M).